Consider the following 148-residue polypeptide: Ribosomal RNA large subunit methyltransferase H (148 aa).

Residues L62, G94, and 113–118 (LSLLTL) contribute to the S-adenosyl-L-methionine site.

Belongs to the RNA methyltransferase RlmH family. As to quaternary structure, homodimer.

The protein resides in the cytoplasm. It carries out the reaction pseudouridine(1915) in 23S rRNA + S-adenosyl-L-methionine = N(3)-methylpseudouridine(1915) in 23S rRNA + S-adenosyl-L-homocysteine + H(+). Its function is as follows. Specifically methylates the pseudouridine at position 1915 (m3Psi1915) in 23S rRNA. The protein is Ribosomal RNA large subunit methyltransferase H of Deinococcus geothermalis (strain DSM 11300 / CIP 105573 / AG-3a).